Here is a 65-residue protein sequence, read N- to C-terminus: Large ribosomal subunit protein bL35 (65 aa).

It belongs to the bacterial ribosomal protein bL35 family.

In Aeromonas salmonicida (strain A449), this protein is Large ribosomal subunit protein bL35.